We begin with the raw amino-acid sequence, 858 residues long: Potassium channel KOR1 (858 aa).

A disordered region spans residues 1 to 41 (MGRGIGSKRRVEDDDGENMPGRKKKEEEEEEEDDDGEEEYE). The Cytoplasmic segment spans residues 1–102 (MGRGIGSKRR…PDNKWYRLWT (102 aa)). The span at 27–41 (EEEEEEDDDGEEEYE) shows a compositional bias: acidic residues. Residues 103–123 (RFILVWAVYSSFFTPLEFGFF) form a helical membrane-spanning segment. The Extracellular portion of the chain corresponds to 124–130 (RGLPRNL). Residues 131-151 (FFLDIAGQIAFLIDIVLRFFV) form a helical membrane-spanning segment. Over 152 to 174 (AYRDPDTYRMVHNPTSIALRYCK) the chain is Cytoplasmic. The helical transmembrane segment at 175–195 (SSFIFDLLGCFPWDAIYKACG) threads the bilayer. Topologically, residues 196-201 (SKEEVR) are extracellular. The helical; Voltage-sensor transmembrane segment at 202-222 (YLLWIRLTRAMKVTEFFRSME) threads the bilayer. The Cytoplasmic segment spans residues 223–236 (KDIRINYLFTRIVK). Residues 237–257 (LIVVELYCTHTAACIFYYLAT) form a helical membrane-spanning segment. Residues 258–292 (TLPESMEGYTWIGSLQLGDYSYSHFREIDLTKRYM) lie on the Extracellular side of the membrane. Positions 293 to 312 (TSLYFAIVTMATVGYGDIHA) form an intramembrane region, pore-forming. The Extracellular portion of the chain corresponds to 313 to 316 (VNVR). Residues 317-337 (EMIFIMIYVSFDMILGAYLIG) traverse the membrane as a helical segment. Residues 338–858 (NMTALIVKGS…GDDGGTEARQ (521 aa)) are Cytoplasmic-facing. 419-539 (LFKGCSAEFI…RRILSNLSES (121 aa)) serves as a coordination point for a nucleoside 3',5'-cyclic phosphate. ANK repeat units lie at residues 559–592 (KQEA…DPKN), 596–625 (DGRS…DIDL), 629–658 (FGNT…KLSL), 660–689 (NAGS…DPNA), 693–722 (DHRA…SVFA), and 726–756 (WGTT…ELSR). The KHA domain maps to 772–858 (RCSVFPHHPW…GDDGGTEARQ (87 aa)).

The protein belongs to the potassium channel family. Plant (TC 1.A.1.4) subfamily.

The protein localises to the membrane. Functionally, probable outward-rectifying potassium channel. This is Potassium channel KOR1 from Oryza sativa subsp. japonica (Rice).